The sequence spans 319 residues: MRHVLLIFCAIIATEALLNTGLQLKIDELFDTPGHTNNWAVLVCTSKFWFNYRHVSNVLALYHSIKRLGIPDSNIIMMLAEDVPCNSRNPRPGTVYAARAGTNLYGSDVEVDYRGEEVTVESFIRVLTGRHHPATPRSKRLLTDHQSNVLIYLTGHGGDSFMKFQDSEELTNVDLAYAIQTMFEDNRYHEMLVIADSCRSASMYEWIDSPNVLSLSSSLTHEESYSYDVDTDIGVYVIDRYTHYTVNFLTKEVKALNSSANMQDYIDSCPARKCLSNTGVRKDHYPKDVKRVRVTDFFGSSRIFQHLSEEIVLDDEFWA.

Residues 1–16 (MRHVLLIFCAIIATEA) form the signal peptide. Active-site residues include histidine 156 and cysteine 198. Asparagine 257 carries an N-linked (GlcNAc...) asparagine glycan.

Belongs to the peptidase C13 family.

It functions in the pathway glycolipid biosynthesis; glycosylphosphatidylinositol-anchor biosynthesis. Mediates GPI anchoring in the endoplasmic reticulum, by replacing a protein's C-terminal GPI attachment signal peptide with a pre-assembled GPI. During this transamidation reaction, the GPI transamidase forms a carbonyl intermediate with the substrate protein. This is Putative GPI-anchor transamidase from Caenorhabditis elegans.